The chain runs to 99 residues: DNA-binding protein Fis (99 aa).

A DNA-binding region (H-T-H motif) is located at residues 75 to 94; the sequence is QTRAAIMMGINRGTLRKKLK.

This sequence belongs to the transcriptional regulatory Fis family. In terms of assembly, homodimer.

Functionally, activates ribosomal RNA transcription. Plays a direct role in upstream activation of rRNA promoters. This chain is DNA-binding protein Fis, found in Tolumonas auensis (strain DSM 9187 / NBRC 110442 / TA 4).